We begin with the raw amino-acid sequence, 737 residues long: Transcriptional repressor CTCF (737 aa).

The residue at position 1 (Met1) is an N-acetylmethionine. A Glycyl lysine isopeptide (Lys-Gly) (interchain with G-Cter in SUMO2) cross-link involves residue Lys18. Lys74 is covalently cross-linked (Glycyl lysine isopeptide (Lys-Gly) (interchain with G-Cter in SUMO)). A disordered region spans residues 180 to 211 (QGELPPQEDPSWQKDPDYQPPAKKTKKTKKSK). Residues 202-211 (KKTKKTKKSK) are compositionally biased toward basic residues. Residue Lys219 forms a Glycyl lysine isopeptide (Lys-Gly) (interchain with G-Cter in SUMO2) linkage. Residues 266–288 (FQCELCSYTCPRRSNLDRHMKSH) form a C2H2-type 1 zinc finger. Position 289 is a phosphothreonine (Thr289). Residues 294-316 (HKCHLCGRAFRTVTLLRNHLNTH) form a C2H2-type 2 zinc finger. Thr317 is modified (phosphothreonine). 2 C2H2-type zinc fingers span residues 322–345 (HKCP…RYKH) and 351–373 (FKCS…IRSH). Thr374 carries the phosphothreonine modification. The C2H2-type 5 zinc-finger motif lies at 379 to 401 (FQCSLCSYASRDTYKLKRHMRTH). Residue Ser402 is modified to Phosphoserine. 5 C2H2-type zinc fingers span residues 407–430 (YECY…LQKH), 437–460 (FHCP…RKQH), 467–489 (KKCR…QKSH), 495–517 (FKCD…KRTH), and 523–546 (YACS…KRYH). A C2H2-type 11; atypical zinc finger spans residues 555–577 (FVCSKCGKTFTRRNTMARHADNC). 2 disordered regions span residues 573–687 (HADN…EDQN) and 699–727 (KKEP…GDLT). Residues 593 to 604 (KSKRGRKRKMRS) show a composition bias toward basic residues. Phosphoserine is present on residues Ser609, Ser610, and Ser612. Positions 610-636 (SDSENAEPDLDDNEEEEEPAVEIEPEP) are enriched in acidic residues. Over residues 637–657 (EPQPQPQPQPQPQPVAPAPPP) the composition is skewed to pro residues. A compositionally biased stretch (polar residues) spans 668 to 687 (RTNQPKQNQPTAIIQVEDQN). Lys699 participates in a covalent cross-link: Glycyl lysine isopeptide (Lys-Gly) (interchain with G-Cter in SUMO); alternate. A Glycyl lysine isopeptide (Lys-Gly) (interchain with G-Cter in SUMO2); alternate cross-link involves residue Lys699. Residues 704–714 (AEPAEGEEEEA) are compositionally biased toward acidic residues.

This sequence belongs to the CTCF zinc-finger protein family. In terms of assembly, interacts with CHD8. Interacts with LLPH. Interacts with CENPE. Interacts with BRD2; promoting BRD2 recruitment to chromatin. In terms of processing, sumoylated on Lys-74 and Lys-699; sumoylation of CTCF contributes to the repressive function of CTCF on the MYC P2 promoter.

It is found in the nucleus. The protein localises to the nucleoplasm. Its subcellular location is the chromosome. The protein resides in the centromere. In terms of biological role, chromatin binding factor that binds to DNA sequence specific sites and regulates the 3D structure of chromatin. Binds together strands of DNA, thus forming chromatin loops, and anchors DNA to cellular structures, such as the nuclear lamina. Defines the boundaries between active and heterochromatic DNA via binding to chromatin insulators, thereby preventing interaction between promoter and nearby enhancers and silencers. Plays a critical role in the epigenetic regulation. Participates in the allele-specific gene expression at the imprinted IGF2/H19 gene locus. On the maternal allele, binding within the H19 imprinting control region (ICR) mediates maternally inherited higher-order chromatin conformation to restrict enhancer access to IGF2. Mediates interchromosomal association between IGF2/H19 and WSB1/NF1 and may direct distant DNA segments to a common transcription factory. Regulates asynchronous replication of IGF2/H19. Plays a critical role in gene silencing over considerable distances in the genome. Preferentially interacts with unmethylated DNA, preventing spreading of CpG methylation and maintaining methylation-free zones. Inversely, binding to target sites is prevented by CpG methylation. Plays an important role in chromatin remodeling. Can dimerize when it is bound to different DNA sequences, mediating long-range chromatin looping. Causes local loss of histone acetylation and gain of histone methylation in the beta-globin locus, without affecting transcription. When bound to chromatin, it provides an anchor point for nucleosomes positioning. Seems to be essential for homologous X-chromosome pairing. May participate with Tsix in establishing a regulatable epigenetic switch for X chromosome inactivation. May play a role in preventing the propagation of stable methylation at the escape genes from X-inactivation. Involved in sister chromatid cohesion. Associates with both centromeres and chromosomal arms during metaphase and required for cohesin localization to CTCF sites. Plays a role in the recruitment of CENPE to the pericentromeric/centromeric regions of the chromosome during mitosis. Acts as a transcriptional repressor binding to promoters of vertebrate MYC gene and BAG1 gene. Also binds to the PLK and PIM1 promoters. Acts as a transcriptional activator of APP. Regulates APOA1/C3/A4/A5 gene cluster and controls MHC class II gene expression. Plays an essential role in oocyte and preimplantation embryo development by activating or repressing transcription. Seems to act as tumor suppressor. The chain is Transcriptional repressor CTCF (Ctcf) from Rattus norvegicus (Rat).